Here is a 94-residue protein sequence, read N- to C-terminus: Co-chaperonin GroES (94 aa).

Belongs to the GroES chaperonin family. In terms of assembly, heptamer of 7 subunits arranged in a ring. Interacts with the chaperonin GroEL.

The protein localises to the cytoplasm. Functionally, together with the chaperonin GroEL, plays an essential role in assisting protein folding. The GroEL-GroES system forms a nano-cage that allows encapsulation of the non-native substrate proteins and provides a physical environment optimized to promote and accelerate protein folding. GroES binds to the apical surface of the GroEL ring, thereby capping the opening of the GroEL channel. The polypeptide is Co-chaperonin GroES (Thermoanaerobacter pseudethanolicus (strain ATCC 33223 / 39E) (Clostridium thermohydrosulfuricum)).